Reading from the N-terminus, the 178-residue chain is Large ribosomal subunit protein uL6 (178 aa).

This sequence belongs to the universal ribosomal protein uL6 family. Part of the 50S ribosomal subunit.

In terms of biological role, this protein binds to the 23S rRNA, and is important in its secondary structure. It is located near the subunit interface in the base of the L7/L12 stalk, and near the tRNA binding site of the peptidyltransferase center. This is Large ribosomal subunit protein uL6 from Limosilactobacillus fermentum (strain NBRC 3956 / LMG 18251) (Lactobacillus fermentum).